The sequence spans 184 residues: MGLCSDRWITRMSREHGMIEPFEDRQVRQGVISYGVSSYGYDMRVAREFKIFTNVLSSVVDPKAFDPKSFVEFEGDVCIVPPNSFALARSVEYFRIPRNVLTLTVGKSTYARCGIITNVTPFEPEWEGYVTLEISNTTPLPAKIYANEGIAQVVFFTGDEPPEVSYGDKKGKYQGQHGVTLPRI.

DCTP-binding positions include 107 to 112 (KSTYAR), 131 to 133 (TLE), Gln152, Tyr166, and Gln176. Glu133 acts as the Proton donor/acceptor in catalysis.

The protein belongs to the dCTP deaminase family. As to quaternary structure, homotrimer.

The enzyme catalyses dCTP + H2O + H(+) = dUTP + NH4(+). The protein operates within pyrimidine metabolism; dUMP biosynthesis; dUMP from dCTP (dUTP route): step 1/2. Functionally, catalyzes the deamination of dCTP to dUTP. This is dCTP deaminase from Gemmatimonas aurantiaca (strain DSM 14586 / JCM 11422 / NBRC 100505 / T-27).